A 272-amino-acid polypeptide reads, in one-letter code: MIKVKFAVIGNPISHSLSPLMHHANFQSLNLENTYEAINVPVNQFQDIKKIISEKSIDGFNVTIPHKERIIPYLDDINEQAKSVGAVNTVLVKDGKWIGYNTDGIGYVNGLKQIYEGIEDAYILILGAGGASKGIANELYKIVRPTLTVANRTMSRFNNWSLNINKINLSHAESHLDEFDIIINTTPAGMNGNTDSVISLNRLASHTLVSDIVYNPYKTPILIEAEQRGNPIYNGLDMFVHQGAESFKIWTNLEPDIKAMKNIVIQKLKGEL.

Shikimate-binding positions include 16 to 18 and threonine 63; that span reads SLS. Catalysis depends on lysine 67, which acts as the Proton acceptor. Residue glutamate 79 participates in NADP(+) binding. The shikimate site is built by asparagine 88 and aspartate 103. Residues 127–131, 151–156, and isoleucine 212 each bind NADP(+); these read GAGGA and NRTMSR. Tyrosine 214 provides a ligand contact to shikimate. Glycine 235 is a binding site for NADP(+).

Belongs to the shikimate dehydrogenase family. In terms of assembly, homodimer.

The enzyme catalyses shikimate + NADP(+) = 3-dehydroshikimate + NADPH + H(+). Its pathway is metabolic intermediate biosynthesis; chorismate biosynthesis; chorismate from D-erythrose 4-phosphate and phosphoenolpyruvate: step 4/7. In terms of biological role, involved in the biosynthesis of the chorismate, which leads to the biosynthesis of aromatic amino acids. Catalyzes the reversible NADPH linked reduction of 3-dehydroshikimate (DHSA) to yield shikimate (SA). The chain is Shikimate dehydrogenase (NADP(+)) from Staphylococcus epidermidis (strain ATCC 12228 / FDA PCI 1200).